The primary structure comprises 297 residues: SWIRM domain-containing protein laf1 (297 aa).

Disordered regions lie at residues 50 to 70 (PKCS…KPTA) and 109 to 173 (STPA…EFSS). Residues 159–173 (QHNTRFKQSSREFSS) are compositionally biased toward polar residues. The SWIRM domain maps to 207-297 (LRSEWKGPPL…AFHDEGFFDD (91 aa)).

As to quaternary structure, component of the RPD3C(L) complex.

It localises to the nucleus. Its function is as follows. Component of the RPD3C(L) histone deacetylase complex (HDAC) responsible for the deacetylation of lysine residues on the N-terminal part of the core histones (H2A, H2B, H3 and H4). Histone deacetylation gives a tag for epigenetic repression and plays an important role in transcriptional regulation, cell cycle progression and developmental events. The protein is SWIRM domain-containing protein laf1 (laf1) of Schizosaccharomyces pombe (strain 972 / ATCC 24843) (Fission yeast).